The following is a 435-amino-acid chain: 3-phosphoshikimate 1-carboxyvinyltransferase (435 aa).

3-phosphoshikimate-binding residues include Lys-15, Ser-16, and Arg-20. Lys-15 is a phosphoenolpyruvate binding site. Phosphoenolpyruvate-binding residues include Gly-96 and Arg-124. 3-phosphoshikimate contacts are provided by Ser-169, Gln-171, Ser-195, Asp-319, and Lys-346. Gln-171 serves as a coordination point for phosphoenolpyruvate. Asp-319 functions as the Proton acceptor in the catalytic mechanism. Residues Arg-350 and Arg-395 each contribute to the phosphoenolpyruvate site.

The protein belongs to the EPSP synthase family. As to quaternary structure, monomer.

It is found in the cytoplasm. It catalyses the reaction 3-phosphoshikimate + phosphoenolpyruvate = 5-O-(1-carboxyvinyl)-3-phosphoshikimate + phosphate. Its pathway is metabolic intermediate biosynthesis; chorismate biosynthesis; chorismate from D-erythrose 4-phosphate and phosphoenolpyruvate: step 6/7. Functionally, catalyzes the transfer of the enolpyruvyl moiety of phosphoenolpyruvate (PEP) to the 5-hydroxyl of shikimate-3-phosphate (S3P) to produce enolpyruvyl shikimate-3-phosphate and inorganic phosphate. This chain is 3-phosphoshikimate 1-carboxyvinyltransferase, found in Chlorobium phaeobacteroides (strain BS1).